The primary structure comprises 472 residues: Ribosomal protein uS12 methylthiotransferase RimO (472 aa).

Positions 33 to 143 (NRIGFVSLGC…VLKHVHKYVP (111 aa)) constitute an MTTase N-terminal domain. The [4Fe-4S] cluster site is built by Cys-42, Cys-78, Cys-107, Cys-175, Cys-179, and Cys-182. The Radical SAM core domain maps to 161–398 (LTPKHYAYLK…MELQAEISAE (238 aa)). The 67-residue stretch at 401–467 (ARFVGRTLDI…EHDLWAEVVD (67 aa)) folds into the TRAM domain.

Belongs to the methylthiotransferase family. RimO subfamily. Requires [4Fe-4S] cluster as cofactor.

Its subcellular location is the cytoplasm. The catalysed reaction is L-aspartate(89)-[ribosomal protein uS12]-hydrogen + (sulfur carrier)-SH + AH2 + 2 S-adenosyl-L-methionine = 3-methylsulfanyl-L-aspartate(89)-[ribosomal protein uS12]-hydrogen + (sulfur carrier)-H + 5'-deoxyadenosine + L-methionine + A + S-adenosyl-L-homocysteine + 2 H(+). Functionally, catalyzes the methylthiolation of an aspartic acid residue of ribosomal protein uS12. The polypeptide is Ribosomal protein uS12 methylthiotransferase RimO (Shewanella sp. (strain W3-18-1)).